Here is a 668-residue protein sequence, read N- to C-terminus: tRNA 5-methylaminomethyl-2-thiouridine biosynthesis bifunctional protein MnmC (668 aa).

Residues 1–245 (MKHYSIQPAN…KREMLCGVME (245 aa)) are tRNA (mnm(5)s(2)U34)-methyltransferase. The segment at 270-668 (IGGGIASALL…LLKGKAVKAG (399 aa)) is FAD-dependent cmnm(5)s(2)U34 oxidoreductase.

The protein in the N-terminal section; belongs to the methyltransferase superfamily. tRNA (mnm(5)s(2)U34)-methyltransferase family. It in the C-terminal section; belongs to the DAO family. Requires FAD as cofactor.

The protein localises to the cytoplasm. The enzyme catalyses 5-aminomethyl-2-thiouridine(34) in tRNA + S-adenosyl-L-methionine = 5-methylaminomethyl-2-thiouridine(34) in tRNA + S-adenosyl-L-homocysteine + H(+). Catalyzes the last two steps in the biosynthesis of 5-methylaminomethyl-2-thiouridine (mnm(5)s(2)U) at the wobble position (U34) in tRNA. Catalyzes the FAD-dependent demodification of cmnm(5)s(2)U34 to nm(5)s(2)U34, followed by the transfer of a methyl group from S-adenosyl-L-methionine to nm(5)s(2)U34, to form mnm(5)s(2)U34. This Escherichia coli O157:H7 protein is tRNA 5-methylaminomethyl-2-thiouridine biosynthesis bifunctional protein MnmC.